A 478-amino-acid polypeptide reads, in one-letter code: Sodium-dependent phosphate transport protein 3 (478 aa).

Residues Asn-28, Asn-47, Asn-56, and Asn-69 are each glycosylated (N-linked (GlcNAc...) asparagine). Transmembrane regions (helical) follow at residues 98–118 (ISYGIILTLIPSGYLAGIFGA), 130–150 (SLLTLFTPLAADFGVILVIVI), 183–203 (SIAGSGAAFGSFIILCVGGLI), 211–231 (FIFYIFGSIGCVCCVLWFTVI), 273–293 (LPLWAIFMGFFSHFWLCTIII), 317–337 (LPFIAASSCTILGGQMADFLL), 341–361 (LLSLITVRKLFSSLGLLLPSL), 363–383 (AVALPFVTSSYIATIVLLILI), 405–425 (YASFLMGISRGFGLTAGIISS), and 442–462 (NVFFLSAAVNMFGLIFYLIFG).

Belongs to the major facilitator superfamily. Sodium/anion cotransporter family. As to expression, expressed in the liver, kidney, placenta, lung and thyroid (at protein level).

It is found in the apical cell membrane. It catalyses the reaction 3 Na(+)(out) + phosphate(out) = 3 Na(+)(in) + phosphate(in). The catalysed reaction is urate(out) + n chloride(in) = urate(in) + n chloride(out). Acts as a membrane potential-dependent organic anion transporter, the transport requires a low concentration of chloride ions. Mediates chloride-dependent transport of urate. Can actively transport inorganic phosphate into cells via Na(+) cotransport. This is Sodium-dependent phosphate transport protein 3 (Slc17a2) from Mus musculus (Mouse).